The chain runs to 446 residues: Fatty acid desaturase 2 (446 aa).

Topologically, residues Met-1–Pro-132 are cytoplasmic. The region spanning Glu-20–Ala-97 is the Cytochrome b5 heme-binding domain. The chain crosses the membrane as a helical span at residues Ala-133–Leu-153. Position 154 (His-154) is a topological domain, lumenal. Residues Tyr-155 to Ala-175 traverse the membrane as a helical segment. The Cytoplasmic portion of the chain corresponds to Gln-176–His-265. The Histidine box-1 motif lies at His-182–His-186. The short motif at His-219–His-223 is the Histidine box-2 element. Residues Leu-266 to Ile-286 form a helical membrane-spanning segment. Over Lys-287–Arg-307 the chain is Lumenal. The helical transmembrane segment at Phe-308–Val-328 threads the bilayer. Residues Arg-329–Lys-446 are Cytoplasmic-facing. Positions Gln-384–His-388 match the Histidine box-3 motif.

This sequence belongs to the fatty acid desaturase type 1 family.

Its subcellular location is the endoplasmic reticulum membrane. Its pathway is lipid metabolism; polyunsaturated fatty acid biosynthesis. Its function is as follows. Component of a lipid metabolic pathway that catalyzes biosynthesis of highly unsaturated fatty acids (HUFA) from precursor essential polyunsaturated fatty acids (PUFA) linoleic acid (LA) (18:2n-6) and alpha-linolenic acid (ALA) (18:3n-3). Catalyzes the first and rate limiting step in this pathway which is the desaturation of LA (18:2n-6) and ALA (18:3n-3) into gamma-linoleic acid (GLA) (18:3n-6) and stearidonic acid (18:4n-3) respectively and other desaturation steps. Highly unsaturated fatty acids (HUFA) play pivotal roles in many biological functions. The protein is Fatty acid desaturase 2 (fads2) of Xenopus laevis (African clawed frog).